Here is a 500-residue protein sequence, read N- to C-terminus: Glucose-1-phosphate adenylyltransferase small subunit 1, chloroplastic/amyloplastic (500 aa).

Residues 1-50 (MAMMAMGAASWAPIPAPARAAAAFYPGRDLAAARRRRGAAARRPFVFTPR) constitute a chloroplast transit peptide.

This sequence belongs to the bacterial/plant glucose-1-phosphate adenylyltransferase family. Heterotetramer composed of two small and two large subunits. Expressed in leaves.

It localises to the plastid. It is found in the chloroplast. The protein resides in the amyloplast. It carries out the reaction alpha-D-glucose 1-phosphate + ATP + H(+) = ADP-alpha-D-glucose + diphosphate. Its pathway is glycan biosynthesis; starch biosynthesis. With respect to regulation, activated by 3'phosphoglycerate, inhibited by orthophosphate. Allosteric regulation. Functionally, involved in synthesis of starch. Catalyzes the synthesis of ADP-glucose, a molecule that serves as an activated glycosyl donor for alpha-1,4-glucan synthesis. Essential for starch synthesis in leaf chloroplasts and endosperm amyloplasts. This Oryza sativa subsp. japonica (Rice) protein is Glucose-1-phosphate adenylyltransferase small subunit 1, chloroplastic/amyloplastic.